We begin with the raw amino-acid sequence, 423 residues long: Flavohemoprotein B (423 aa).

Residues 1–136 form the Globin domain; that stretch reads MLSQKSIQII…VAQAFMDAEE (136 aa). Histidine 83 contacts heme b. Residues tyrosine 93 and glutamate 135 each act as charge relay system in the active site. Residues 149-423 form a reductase region; the sequence is WKDTREFVVD…LRGVKNIIEN (275 aa). The FAD-binding FR-type domain maps to 150–268; that stretch reads KDTREFVVDR…SVPAGDFVVN (119 aa). Residues tyrosine 188 and 212–215 each bind FAD; that span reads RHYS. NADP(+) is bound at residue 281 to 286; that stretch reads GVGINP. Residue 400-403 coordinates FAD; it reads LFGP.

The protein belongs to the globin family. Two-domain flavohemoproteins subfamily. In the C-terminal section; belongs to the flavoprotein pyridine nucleotide cytochrome reductase family. FAD is required as a cofactor. The cofactor is heme b.

Its subcellular location is the cytoplasm. It carries out the reaction 2 nitric oxide + NADPH + 2 O2 = 2 nitrate + NADP(+) + H(+). The enzyme catalyses 2 nitric oxide + NADH + 2 O2 = 2 nitrate + NAD(+) + H(+). Functionally, is involved in NO detoxification in an aerobic process, termed nitric oxide dioxygenase (NOD) reaction that utilizes O(2) and NAD(P)H to convert NO to nitrate, which protects the cell from various noxious nitrogen compounds. Therefore, plays a central role in the inducible response to nitrosative stress. In terms of biological role, in the presence of oxygen and NADH, it has NADH oxidase activity, which leads to the generation of superoxide and H(2)O(2). Under anaerobic conditions, it also exhibits nitric oxide reductase and FAD reductase activities. However, all these reactions are much lower than NOD activity. The polypeptide is Flavohemoprotein B (fhbB) (Dictyostelium discoideum (Social amoeba)).